A 3391-amino-acid polypeptide reads, in one-letter code: Genome polyprotein (3391 aa).

The interval 1-15 is interaction with host EXOC1; it reads MNNQRKKTARPSFNM. Residues 1 to 101 are Cytoplasmic-facing; that stretch reads MNNQRKKTAR…LNIMNRRKRS (101 aa). The hydrophobic; homodimerization of capsid protein C stretch occupies residues 37 to 72; it reads LLSGQGPMKLVMAFIAFLRFLAIPPTAGILARWGSF. Residues 101–114 constitute a propeptide, ER anchor for the capsid protein C, removed in mature form by serine protease NS3; it reads SVTMLLMLLPTALA. The chain crosses the membrane as a helical span at residues 102-119; sequence VTMLLMLLPTALAFHLTT. The Extracellular segment spans residues 120 to 242; it reads RGGEPHMIVS…QIQRVETWAL (123 aa). N183 carries N-linked (GlcNAc...) asparagine; by host glycosylation. Residues 243–260 traverse the membrane as a helical segment; that stretch reads RHPGFTVIALFLAHAIGT. S261 is a topological domain (cytoplasmic). Residues 262-280 traverse the membrane as a helical segment; sequence ITQKGIIFILLMLVTPSMA. Residues 281 to 725 are Extracellular-facing; sequence MRCVGIGSRD…HQVFGTAYGV (445 aa). 4 disulfides stabilise this stretch: C283–C310, C340–C401, C354–C385, and C372–C396. N-linked (GlcNAc...) asparagine; by host glycosylation occurs at N347. The interval 378-391 is fusion peptide; that stretch reads DRGWGNGCGLFGKG. N-linked (GlcNAc...) asparagine; by host glycosylation is present at N433. Cystine bridges form between C465-C565 and C582-C613. Residues 726 to 746 form a helical membrane-spanning segment; it reads LFSGVSWTMKIGIGILLTWLG. Over 747-752 the chain is Cytoplasmic; sequence LNSRST. Residues 753–773 form a helical membrane-spanning segment; that stretch reads SLSMTCIAVGMVTLYLGVMVQ. Over 774 to 1198 the chain is Extracellular; that stretch reads ADSGCVINWK…NASDRMGMGT (425 aa). Disulfide bonds link C778/C789, C829/C917, C953/C997, C1054/C1103, C1065/C1087, and C1086/C1090. N904 and N981 each carry an N-linked (GlcNAc...) asparagine; by host glycan. N1189 carries an N-linked (GlcNAc...) asparagine; by host glycan. Residues 1199–1219 form a helical membrane-spanning segment; the sequence is TYLALMATFKMRPMFAVGLLF. Topologically, residues 1220-1225 are cytoplasmic; that stretch reads RRLTSR. Residues 1226–1244 form a helical membrane-spanning segment; it reads EVLLLTIGLSLVASVELPN. At 1245–1268 the chain is on the lumenal side; sequence SLEELGDGLAMGIMILKLLTDFQS. A helical membrane pass occupies residues 1269-1289; sequence HQLWATLLSLTFVKTTFSLHY. A topological domain (cytoplasmic) is located at residue A1290. A helical membrane pass occupies residues 1291–1309; that stretch reads WKTMAMVLSIVSLFPLCLS. Over 1310-1314 the chain is Lumenal; sequence TTSQK. Residues 1315 to 1335 form a helical membrane-spanning segment; that stretch reads TTWLPVLLGSLGCKPLTMFLI. Residues 1336 to 1345 are Cytoplasmic-facing; sequence AENKIWGRKS. A helical transmembrane segment spans residues 1346–1366; it reads WPLNEGIMAVGIVSILLSSLL. Over 1367-1369 the chain is Lumenal; the sequence is KND. Residues 1370-1390 traverse the membrane as a helical segment; sequence VPLAGPLIAGGMLIACYVISG. Residues 1391–1446 are Cytoplasmic-facing; sequence SSADLSLEKAAEVSWEEEAEHSGASHNILVEVQDDGTMKIKDEERDDTLTILLKAT. The segment at 1397–1436 is interacts with and activates NS3 protease; it reads LEKAAEVSWEEEAEHSGASHNILVEVQDDGTMKIKDEERD. An intramembrane region (helical) is located at residues 1447–1467; the sequence is LLAVSGVYPLSIPATLFVWYF. At 1468–2147 the chain is on the cytoplasmic side; sequence WQKKKQRSGV…MEELPDTIET (680 aa). In terms of domain architecture, Peptidase S7 spans 1475–1652; it reads SGVLWDTPSP…KASQEGPLPE (178 aa). Catalysis depends on charge relay system; for serine protease NS3 activity residues H1525, D1549, and S1609. One can recognise a Helicase ATP-binding domain in the interval 1655 to 1811; sequence DEVFRKRNLT…QSNAVIQDEE (157 aa). The segment at 1659-1662 is important for RNA-binding; sequence RKRN. An ATP-binding site is contributed by 1668 to 1675; the sequence is LHPGSGKT. Residues 1759 to 1762 carry the DEAH box motif; it reads DEAH. The Helicase C-terminal domain maps to 1821–1988; it reads SGYEWITDFP…IIPALFEPER (168 aa). Residue K1863 is modified to N6-acetyllysine; by host. A helical transmembrane segment spans residues 2148–2168; that stretch reads LMLLALIAVLTGGVTLFFLSG. Residues 2169 to 2170 lie on the Lumenal side of the membrane; it reads KG. Positions 2171–2191 form an intramembrane region, helical; that stretch reads LGKTSIGLLCVMASSVLLWMA. Position 2192 (S2192) is a topological domain, lumenal. Residues 2193 to 2213 traverse the membrane as a helical segment; the sequence is VEPHWIAASIILEFFLMVLLI. The Cytoplasmic segment spans residues 2214 to 2228; sequence PEPDRQRTPQDNQLA. Residues 2229–2249 form a helical membrane-spanning segment; it reads YVVIGLLFMILTVAANEMGLL. The Lumenal segment spans residues 2250–2275; the sequence is ETTKKDLGIGHVAAENHHHATMLDVD. Residues 2276–2296 constitute an intramembrane region (helical); sequence LRPASAWTLYAVATTVITPMM. At 2297 to 2348 the chain is on the lumenal side; that stretch reads RHTIENTTANISLTAIANQAAILMGLDKGWPISKMDIGVPLLALGCYSQVNP. 2 N-linked (GlcNAc...) asparagine; by host glycosylation sites follow: N2302 and N2306. A helical membrane pass occupies residues 2349–2369; that stretch reads LTLTAAVLMLVAHYAIIGPGL. The Cytoplasmic portion of the chain corresponds to 2370–2414; the sequence is QAKATREAQKRTAAGIMKNPTVDGIVAIDLDPVVYDAKFEKQLGQ. The helical transmembrane segment at 2415-2435 threads the bilayer; it reads IMLLILCTSQILLMRTTWALC. Topologically, residues 2436 to 2460 are lumenal; the sequence is ESITLATGPLTTLWEGSPGKFWNTT. An N-linked (GlcNAc...) asparagine; by host glycan is attached at N2458. The helical transmembrane segment at 2461–2481 threads the bilayer; that stretch reads IAVSMANIFRGSYLAGAGLAF. Over 2482-3391 the chain is Cytoplasmic; sequence SLMKSLGGGR…NESDPEGALW (910 aa). The region spanning 2494–2755 is the mRNA cap 0-1 NS5-type MT domain; it reads TGAKGKHWER…DVDLGAGTRH (262 aa). S2548 contributes to the S-adenosyl-L-methionine binding site. Phosphoserine is present on S2548. K2553 (for 2'-O-MTase activity) is an active-site residue. The SUMO-interacting motif signature appears at 2569–2572; the sequence is VIDL. Residues G2578, W2579, T2596, K2597, D2623, and V2624 each contribute to the S-adenosyl-L-methionine site. D2638 acts as the For 2'-O-MTase activity in catalysis. I2639 lines the S-adenosyl-L-methionine pocket. Residues K2672 and E2708 each act as for 2'-O-MTase activity in the active site. An S-adenosyl-L-methionine-binding site is contributed by Y2710. The Zn(2+) site is built by E2929, H2933, C2938, and C2941. A RdRp catalytic domain is found at 3019–3168; it reads GNMYADDTAG…KPIDDRFATA (150 aa). Residues H3203, C3219, and C3338 each contribute to the Zn(2+) site.

The protein in the N-terminal section; belongs to the class I-like SAM-binding methyltransferase superfamily. mRNA cap 0-1 NS5-type methyltransferase family. In terms of assembly, homodimer. Interacts (via N-terminus) with host EXOC1 (via C-terminus); this interaction results in EXOC1 degradation through the proteasome degradation pathway. As to quaternary structure, forms heterodimers with envelope protein E in the endoplasmic reticulum and Golgi. Homodimer; in the endoplasmic reticulum and Golgi. Interacts with protein prM. Interacts with non-structural protein 1. In terms of assembly, homodimer; Homohexamer when secreted. Interacts with envelope protein E. As to quaternary structure, interacts (via N-terminus) with serine protease NS3. Forms a heterodimer with serine protease NS3. May form homooligomers. In terms of assembly, forms a heterodimer with NS2B. Interacts with NS4B. Interacts with unphosphorylated RNA-directed RNA polymerase NS5; this interaction stimulates RNA-directed RNA polymerase NS5 guanylyltransferase activity. Interacts with host SHFL. As to quaternary structure, interacts with host MAVS; this interaction inhibits the synthesis of IFN-beta. Interacts with host SHFL. Interacts with host AUP1; the interaction occurs in the presence of Dengue virus NS4B and induces lipophagy which facilitates production of virus progeny particles. Interacts with serine protease NS3. In terms of assembly, homodimer. Interacts with host STAT2; this interaction inhibits the phosphorylation of the latter, and, when all viral proteins are present (polyprotein), targets STAT2 for degradation. Interacts with serine protease NS3. In terms of processing, specific enzymatic cleavages in vivo yield mature proteins. Cleavages in the lumen of endoplasmic reticulum are performed by host signal peptidase, whereas cleavages in the cytoplasmic side are performed by serine protease NS3. Signal cleavage at the 2K-4B site requires a prior NS3 protease-mediated cleavage at the 4A-2K site. Cleaved in post-Golgi vesicles by a host furin, releasing the mature small envelope protein M, and peptide pr. This cleavage is incomplete as up to 30% of viral particles still carry uncleaved prM. Post-translationally, N-glycosylated. In terms of processing, N-glycosylated. The excreted form is glycosylated and this is required for efficient secretion of the protein from infected cells. Acetylated by host KAT5. Acetylation modulates NS3 RNA-binding and unwinding activities and plays an important positive role for viral replication. Post-translationally, sumoylation of RNA-directed RNA polymerase NS5 increases NS5 protein stability allowing proper viral RNA replication. In terms of processing, phosphorylated on serines residues. This phosphorylation may trigger NS5 nuclear localization.

Its subcellular location is the virion. The protein localises to the host nucleus. It localises to the host cytoplasm. The protein resides in the host perinuclear region. It is found in the secreted. Its subcellular location is the virion membrane. The protein localises to the host endoplasmic reticulum membrane. It localises to the host mitochondrion. It carries out the reaction Selective hydrolysis of -Xaa-Xaa-|-Yaa- bonds in which each of the Xaa can be either Arg or Lys and Yaa can be either Ser or Ala.. The catalysed reaction is RNA(n) + a ribonucleoside 5'-triphosphate = RNA(n+1) + diphosphate. The enzyme catalyses a ribonucleoside 5'-triphosphate + H2O = a ribonucleoside 5'-diphosphate + phosphate + H(+). It catalyses the reaction ATP + H2O = ADP + phosphate + H(+). It carries out the reaction a 5'-end (5'-triphosphoguanosine)-ribonucleoside in mRNA + S-adenosyl-L-methionine = a 5'-end (N(7)-methyl 5'-triphosphoguanosine)-ribonucleoside in mRNA + S-adenosyl-L-homocysteine. The catalysed reaction is a 5'-end (N(7)-methyl 5'-triphosphoguanosine)-ribonucleoside in mRNA + S-adenosyl-L-methionine = a 5'-end (N(7)-methyl 5'-triphosphoguanosine)-(2'-O-methyl-ribonucleoside) in mRNA + S-adenosyl-L-homocysteine + H(+). Plays a role in virus budding by binding to the cell membrane and gathering the viral RNA into a nucleocapsid that forms the core of a mature virus particle. During virus entry, may induce genome penetration into the host cytoplasm after hemifusion induced by the surface proteins. Can migrate to the cell nucleus where it modulates host functions. Overcomes the anti-viral effects of host EXOC1 by sequestering and degrading the latter through the proteasome degradation pathway. Its function is as follows. Inhibits RNA silencing by interfering with host Dicer. In terms of biological role, prevents premature fusion activity of envelope proteins in trans-Golgi by binding to envelope protein E at pH6.0. After virion release in extracellular space, gets dissociated from E dimers. Functionally, acts as a chaperone for envelope protein E during intracellular virion assembly by masking and inactivating envelope protein E fusion peptide. prM is the only viral peptide matured by host furin in the trans-Golgi network probably to avoid catastrophic activation of the viral fusion activity in acidic Golgi compartment prior to virion release. prM-E cleavage is inefficient, and many virions are only partially matured. These uncleaved prM would play a role in immune evasion. May play a role in virus budding. Exerts cytotoxic effects by activating a mitochondrial apoptotic pathway through M ectodomain. May display a viroporin activity. Its function is as follows. Binds to host cell surface receptor and mediates fusion between viral and cellular membranes. Envelope protein is synthesized in the endoplasmic reticulum in the form of heterodimer with protein prM. They play a role in virion budding in the ER, and the newly formed immature particle is covered with 60 spikes composed of heterodimer between precursor prM and envelope protein E. The virion is transported to the Golgi apparatus where the low pH causes dissociation of PrM-E heterodimers and formation of E homodimers. prM-E cleavage is inefficient, and many virions are only partially matured. These uncleaved prM would play a role in immune evasion. In terms of biological role, involved in immune evasion, pathogenesis and viral replication. Once cleaved off the polyprotein, is targeted to three destinations: the viral replication cycle, the plasma membrane and the extracellular compartment. Essential for viral replication. Required for formation of the replication complex and recruitment of other non-structural proteins to the ER-derived membrane structures. Excreted as a hexameric lipoparticle that plays a role against host immune response. Antagonizing the complement function. Binds to the host macrophages and dendritic cells. Inhibits signal transduction originating from Toll-like receptor 3 (TLR3). Functionally, disrupts the host endothelial glycocalyx layer of host pulmonary microvascular endothelial cells, inducing degradation of sialic acid and shedding of heparan sulfate proteoglycans. NS1 induces expression of sialidases, heparanase, and activates cathepsin L, which activates heparanase via enzymatic cleavage. These effects are probably linked to the endothelial hyperpermeability observed in severe dengue disease. Component of the viral RNA replication complex that functions in virion assembly and antagonizes the host immune response. Its function is as follows. Required cofactor for the serine protease function of NS3. May have membrane-destabilizing activity and form viroporins. In terms of biological role, displays three enzymatic activities: serine protease, NTPase and RNA c. NS3 serine protease, in association with NS2B, performs its autocleavage and cleaves the polyprotein at dibasic sites in the cytoplasm: C-prM, NS2A-NS2B, NS2B-NS3, NS3-NS4A, NS4A-2K and NS4B-NS5. NS3 RNA helicase binds RNA and unwinds dsRNA in the 3' to 5' direction. Functionally, regulates the ATPase activity of the NS3 helicase activity. NS4A allows NS3 helicase to conserve energy during unwinding. Plays a role in the inhibition of the host innate immune response. Interacts with host MAVS and thereby prevents the interaction between RIGI and MAVS. In turn, IFN-beta production is impaired. Interacts with host AUP1 which mediates induction of lipophagy in host cells and facilitates production of virus progeny particles. Functions as a signal peptide for NS4B and is required for the interferon antagonism activity of the latter. Its function is as follows. Induces the formation of ER-derived membrane vesicles where the viral replication takes place. Inhibits interferon (IFN)-induced host STAT1 phosphorylation and nuclear translocation, thereby preventing the establishment of cellular antiviral state by blocking the IFN-alpha/beta pathway. In terms of biological role, replicates the viral (+) and (-) RNA genome, and performs the capping of genomes in the cytoplasm. NS5 methylates viral RNA cap at guanine N-7 and ribose 2'-O positions. Besides its role in RNA genome replication, also prevents the establishment of cellular antiviral state by blocking the interferon-alpha/beta (IFN-alpha/beta) signaling pathway. Inhibits host TYK2 and STAT2 phosphorylation, thereby preventing activation of JAK-STAT signaling pathway. This Aedes aegypti (Yellowfever mosquito) protein is Genome polyprotein.